A 478-amino-acid polypeptide reads, in one-letter code: Violaxanthin de-epoxidase, chloroplastic (478 aa).

A coiled-coil region spans residues 388-453 (LVERLEKKVE…RELSKEEMDV (66 aa)).

Belongs to the calycin superfamily. Lipocalin family.

It localises to the plastid. The protein localises to the chloroplast thylakoid membrane. The catalysed reaction is all-trans-violaxanthin + 2 L-ascorbate = all-trans-zeaxanthin + 2 L-dehydroascorbate + 2 H2O. Part of the xanthophyll (or violaxanthin) cycle for controlling the concentration of zeaxanthin in chloroplasts. Catalyzes the two-step mono de-epoxidation reaction. Stereospecific for all-trans xanthophylls. Zeaxanthin induces the dissipation of excitation energy in the chlorophyll of the light-harvesting protein complex of photosystem II. The chain is Violaxanthin de-epoxidase, chloroplastic (VDE1) from Nicotiana tabacum (Common tobacco).